Reading from the N-terminus, the 73-residue chain is Small ribosomal subunit protein bS18 (73 aa).

It belongs to the bacterial ribosomal protein bS18 family. As to quaternary structure, part of the 30S ribosomal subunit. Forms a tight heterodimer with protein bS6.

Binds as a heterodimer with protein bS6 to the central domain of the 16S rRNA, where it helps stabilize the platform of the 30S subunit. The sequence is that of Small ribosomal subunit protein bS18 from Synechococcus sp. (strain RCC307).